A 110-amino-acid polypeptide reads, in one-letter code: Dermcidin (110 aa).

The N-terminal stretch at 1 to 19 (MRFMTLLFLTALAGALVCA) is a signal peptide. The interval 24-70 (AASAPGSGNPCHEASAAQKENAGEDPGLARQAPKPRKQRSSLLEKGL) is disordered. 2 O-linked (Xyl...) (chondroitin sulfate) serine glycosylation sites follow: S30 and S38. A propeptide spanning residues 50 to 62 (GLARQAPKPRKQR) is cleaved from the precursor. The chain crosses the membrane as a helical span at residues 64-108 (SLLEKGLDGAKKAVGGLGKLGKDAVEDLESVGKGAVHDVKDVLDS). E67 contributes to the Zn(2+) binding site. K68 is subject to N6-acetyllysine. Zn(2+)-binding residues include D71, D86, D90, H100, and D104. L110 is a propeptide.

Homohexamer. Requires Mn(2+) as cofactor. Zn(2+) serves as cofactor. As to expression, detected in urine (at protein level). Constitutively expressed in eccrine sweat gland cells (at protein level). Secreted into the sweat at a concentration of 1-10 micrograms/ml.

The protein localises to the secreted. It is found in the membrane. Functionally, found in sweat, has an antimicrobial activity during early bacterial colonization. The secreted peptide assembles into homohexameric complexes that can associate with and also insert into pathogen membranes. Once inserted in bacteria membranes forms anion channels probably altering the transmembrane potential essential for bacterial survival. Highly effective against E.coli, E.faecalis, S.aureus and C.albicans. Optimal pH and salt concentration resemble the conditions in sweat. Also exhibits proteolytic activity, cleaving on the C-terminal side of Arg and, to a lesser extent, Lys residues. Promotes survival of neurons and displays phosphatase activity. It may bind IgG. In Homo sapiens (Human), this protein is Dermcidin.